The chain runs to 186 residues: Ribosome-recycling factor (186 aa).

Belongs to the RRF family.

It localises to the cytoplasm. Functionally, responsible for the release of ribosomes from messenger RNA at the termination of protein biosynthesis. May increase the efficiency of translation by recycling ribosomes from one round of translation to another. This Bacteroides fragilis (strain ATCC 25285 / DSM 2151 / CCUG 4856 / JCM 11019 / LMG 10263 / NCTC 9343 / Onslow / VPI 2553 / EN-2) protein is Ribosome-recycling factor.